A 213-amino-acid polypeptide reads, in one-letter code: Anti-sigma-W factor RsiW (213 aa).

At 1–86 the chain is on the cytoplasmic side; sequence MSCEQHYRTL…TNRFKVWMRR (86 aa). 3 residues coordinate Zn(2+): histidine 30, cysteine 34, and cysteine 37. A helical transmembrane segment spans residues 87–109; that stretch reads YPLAVAAAVFVLLMSTSLFSMWS. Residues 110-213 lie on the Extracellular side of the membrane; sequence SDGEHVTVTG…ISDEKNSPSS (104 aa).

Belongs to the zinc-associated anti-sigma factor (ZAS) superfamily. Anti-sigma-W factor family. Zn(2+) serves as cofactor. Post-translationally, is processed by three successive proteolytic events. First, the extracellular region of RsiW is cleaved by PrsW (Site-1 cleavage) in response to cell envelope stresses. Next, it undergoes cleavage at an intramembrane site (Site-2 cleavage) mediated by RasP. This cleavage uncovers a cryptic proteolytic tag with conserved alanine residues in the transmembrane segment, that is recognized mainly by the ClpXP protease, which completely degrades the protein in the cytoplasm and leads to the induction of the sigma-W-controlled genes.

Its subcellular location is the membrane. Its function is as follows. Is the anti-sigma factor for SigW. The presence of RsiW leads to the inactivation of SigW, and its proteolytic destruction to sigma-W activation. This chain is Anti-sigma-W factor RsiW (rsiW), found in Halalkalibacterium halodurans (strain ATCC BAA-125 / DSM 18197 / FERM 7344 / JCM 9153 / C-125) (Bacillus halodurans).